The primary structure comprises 121 residues: Large ribosomal subunit protein uL14 (121 aa).

This sequence belongs to the universal ribosomal protein uL14 family. In terms of assembly, part of the 50S ribosomal subunit. Forms a cluster with proteins L3 and L19. In the 70S ribosome, L14 and L19 interact and together make contacts with the 16S rRNA in bridges B5 and B8.

In terms of biological role, binds to 23S rRNA. Forms part of two intersubunit bridges in the 70S ribosome. This Synechococcus sp. (strain CC9311) protein is Large ribosomal subunit protein uL14.